A 169-amino-acid chain; its full sequence is Type II secretion system protein H (169 aa).

Positions 1–29 (MRVARLPLLHPHRAAPVVRRQLRGSSLLE) are cleaved as a propeptide — leader sequence. Residue methionine 30 is modified to N-methylmethionine. The helical transmembrane segment at 32-52 (LVIALIALAGVLAAAALTGGI) threads the bilayer.

Belongs to the GSP H family. Type II secretion is composed of four main components: the outer membrane complex, the inner membrane complex, the cytoplasmic secretion ATPase and the periplasm-spanning pseudopilus. Interacts with core component XpsG. Interacts with minor pseudopilins XpsI and XpsJ. Post-translationally, cleaved by prepilin peptidase. In terms of processing, methylated by prepilin peptidase at the amino group of the N-terminal phenylalanine once the leader sequence is cleaved by prepilin peptidase.

The protein resides in the cell inner membrane. In terms of biological role, component of the type II secretion system required for the energy-dependent secretion of extracellular factors such as proteases and toxins from the periplasm. Part of the pseudopilus tip complex that is critical for the recognition and binding of secretion substrates. In Xanthomonas campestris pv. campestris (strain ATCC 33913 / DSM 3586 / NCPPB 528 / LMG 568 / P 25), this protein is Type II secretion system protein H (xpsH).